A 69-amino-acid chain; its full sequence is Cap-specific mRNA (nucleoside-2'-O-)-methyltransferase (69 aa).

Tyrosine 22 is an mRNA binding site. S-adenosyl-L-methionine is bound by residues glutamine 39, tyrosine 66, and glycine 68.

The protein belongs to the class I-like SAM-binding methyltransferase superfamily. Poxvirus/kinetoplastid 2'-O-MTase family. In terms of assembly, interacts with poly(A) polymerase catalytic subunit OPG063. Interacts with OPG109 and OPG123; these interactions might help linking transcription to capping and polyadenylation.

It is found in the virion. The catalysed reaction is a 5'-end (N(7)-methyl 5'-triphosphoguanosine)-ribonucleoside in mRNA + S-adenosyl-L-methionine = a 5'-end (N(7)-methyl 5'-triphosphoguanosine)-(2'-O-methyl-ribonucleoside) in mRNA + S-adenosyl-L-homocysteine + H(+). In terms of biological role, displays methyltransferase, positive regulation of the poly(A) polymerase and transcription elongation activities. Involved in the modification of both mRNA ends and in intermediate and late gene positive transcription elongation. At the mRNAs 5' end, methylates the ribose 2' OH group of the first transcribed nucleotide, thereby producing a 2'-O-methylpurine cap. At the 3' end, functions as a processivity factor which stimulates the activity of the viral poly(A) polymerase OPG063 that creates mRNA's poly(A) tail. In the presence of OPG102, OPG063 does not dissociate from the RNA allowing tail elongation to around 250 adenylates. The sequence is that of Cap-specific mRNA (nucleoside-2'-O-)-methyltransferase (OPG102) from Sus scrofa (Pig).